We begin with the raw amino-acid sequence, 119 residues long: Large ribosomal subunit protein uL18 (119 aa).

Belongs to the universal ribosomal protein uL18 family. Part of the 50S ribosomal subunit; part of the 5S rRNA/L5/L18/L25 subcomplex. Contacts the 5S and 23S rRNAs.

Its function is as follows. This is one of the proteins that bind and probably mediate the attachment of the 5S RNA into the large ribosomal subunit, where it forms part of the central protuberance. The sequence is that of Large ribosomal subunit protein uL18 from Clostridium botulinum (strain Langeland / NCTC 10281 / Type F).